Reading from the N-terminus, the 242-residue chain is Probable transcriptional regulatory protein Bxeno_A1185 (242 aa).

The protein belongs to the TACO1 family.

It is found in the cytoplasm. In Paraburkholderia xenovorans (strain LB400), this protein is Probable transcriptional regulatory protein Bxeno_A1185.